We begin with the raw amino-acid sequence, 389 residues long: Choline/ethanolaminephosphotransferase 1 (389 aa).

The helical transmembrane segment at 40–60 threads the bilayer; it reads VFPLWMPPNMITLMGFMFLVT. Residue Asn48 participates in CDP-choline binding. Asp95 and Asp98 together coordinate Mg(2+). Position 103 (Arg103) interacts with CDP-choline. Asp116 contacts Mg(2+). Catalysis depends on His117, which acts as the Proton acceptor. Asp120 contacts Mg(2+). The next 7 helical transmembrane spans lie at 141 to 161, 176 to 196, 221 to 241, 252 to 272, 280 to 300, 322 to 344, and 350 to 370; these read TFWF…EHYF, GLAL…EWWA, VLYM…VTNV, MVLA…VLIW, LIAT…GFLV, SLLY…GVPL, and VLLG…TSVI.

Belongs to the CDP-alcohol phosphatidyltransferase class-I family. Mg(2+) is required as a cofactor. Requires Mn(2+) as cofactor.

Its subcellular location is the membrane. It catalyses the reaction CDP-ethanolamine + a 1,2-diacyl-sn-glycerol = a 1,2-diacyl-sn-glycero-3-phosphoethanolamine + CMP + H(+). The enzyme catalyses CDP-choline + a 1,2-diacyl-sn-glycerol = a 1,2-diacyl-sn-glycero-3-phosphocholine + CMP + H(+). The protein operates within phospholipid metabolism; phosphatidylethanolamine biosynthesis; phosphatidylethanolamine from ethanolamine: step 3/3. Its pathway is phospholipid metabolism; phosphatidylcholine biosynthesis; phosphatidylcholine from phosphocholine: step 2/2. Functionally, catalyzes both phosphatidylcholine and phosphatidylethanolamine biosynthesis from CDP-choline and CDP-ethanolamine, respectively. Has a higher cholinephosphotransferase activity than ethanolaminephosphotransferase activity. The polypeptide is Choline/ethanolaminephosphotransferase 1 (AAPT1) (Arabidopsis thaliana (Mouse-ear cress)).